The following is a 315-amino-acid chain: N-acetyl-gamma-glutamyl-phosphate reductase (315 aa).

Residue C117 is part of the active site.

Belongs to the NAGSA dehydrogenase family. Type 2 subfamily.

It is found in the cytoplasm. The enzyme catalyses N-acetyl-L-glutamate 5-semialdehyde + phosphate + NADP(+) = N-acetyl-L-glutamyl 5-phosphate + NADPH + H(+). The protein operates within amino-acid biosynthesis; L-arginine biosynthesis; N(2)-acetyl-L-ornithine from L-glutamate: step 3/4. Catalyzes the NADPH-dependent reduction of N-acetyl-5-glutamyl phosphate to yield N-acetyl-L-glutamate 5-semialdehyde. In Burkholderia lata (strain ATCC 17760 / DSM 23089 / LMG 22485 / NCIMB 9086 / R18194 / 383), this protein is N-acetyl-gamma-glutamyl-phosphate reductase.